Consider the following 417-residue polypeptide: MSKITKIKGFADLFPPESDVFTRMESVARQVFGRYGFVELRTPILERTDLFCRSIGTETDVVQKEMYTFPDRKDRSLTMRPEATAGVMRAYIESGRHTQEPVSKLFTSGPMFRYERPQKGRMRQFHQINCEVLGPVEPHADAELVLMLMRFLTELGLTGLSLQINSLGCKECRPLYRKALSDFLASIDNAALCEDCRRRMETNPLRVLDCKVPGCRELTANAPTILEHNCPECRTHFDAVLRILDSRNVPYVLNDRLVRGLDYYNRTTFEVVSDSIGSQGSVAGGGRYDGLISQLGGPDVPGVGFACGMERLALMMPGAEAPRPHFHVAVLDPAAQDAALLLAEDLRAQGLAGSVGFGAGSIKSRMRLAGKSGARACLILGGDELAAGTVVVKDMDSGEQETIGRDAVAARLLAAGA.

It belongs to the class-II aminoacyl-tRNA synthetase family. As to quaternary structure, homodimer.

It localises to the cytoplasm. It carries out the reaction tRNA(His) + L-histidine + ATP = L-histidyl-tRNA(His) + AMP + diphosphate + H(+). The sequence is that of Histidine--tRNA ligase from Nitratidesulfovibrio vulgaris (strain DP4) (Desulfovibrio vulgaris).